A 430-amino-acid chain; its full sequence is Serine--tRNA ligase (430 aa).

Residue 237-239 (TAE) coordinates L-serine. 268 to 270 (RSE) is an ATP binding site. An L-serine-binding site is contributed by E291. Residue 355-358 (EISS) participates in ATP binding. S391 contacts L-serine.

This sequence belongs to the class-II aminoacyl-tRNA synthetase family. Type-1 seryl-tRNA synthetase subfamily. As to quaternary structure, homodimer. The tRNA molecule binds across the dimer.

It localises to the cytoplasm. The catalysed reaction is tRNA(Ser) + L-serine + ATP = L-seryl-tRNA(Ser) + AMP + diphosphate + H(+). The enzyme catalyses tRNA(Sec) + L-serine + ATP = L-seryl-tRNA(Sec) + AMP + diphosphate + H(+). Its pathway is aminoacyl-tRNA biosynthesis; selenocysteinyl-tRNA(Sec) biosynthesis; L-seryl-tRNA(Sec) from L-serine and tRNA(Sec): step 1/1. Functionally, catalyzes the attachment of serine to tRNA(Ser). Is also able to aminoacylate tRNA(Sec) with serine, to form the misacylated tRNA L-seryl-tRNA(Sec), which will be further converted into selenocysteinyl-tRNA(Sec). The protein is Serine--tRNA ligase of Yersinia pseudotuberculosis serotype O:1b (strain IP 31758).